The sequence spans 282 residues: Pantothenate synthetase (282 aa).

30–37 (MGALHAGH) serves as a coordination point for ATP. H37 acts as the Proton donor in catalysis. (R)-pantoate is bound at residue Q61. Q61 contributes to the beta-alanine binding site. 147–150 (GEKD) is an ATP binding site. Q153 is a (R)-pantoate binding site. Residues V177 and 185 to 188 (LSSR) each bind ATP.

This sequence belongs to the pantothenate synthetase family. In terms of assembly, homodimer.

The protein resides in the cytoplasm. The catalysed reaction is (R)-pantoate + beta-alanine + ATP = (R)-pantothenate + AMP + diphosphate + H(+). It participates in cofactor biosynthesis; (R)-pantothenate biosynthesis; (R)-pantothenate from (R)-pantoate and beta-alanine: step 1/1. Its function is as follows. Catalyzes the condensation of pantoate with beta-alanine in an ATP-dependent reaction via a pantoyl-adenylate intermediate. The protein is Pantothenate synthetase of Phocaeicola vulgatus (strain ATCC 8482 / DSM 1447 / JCM 5826 / CCUG 4940 / NBRC 14291 / NCTC 11154) (Bacteroides vulgatus).